Consider the following 181-residue polypeptide: MYCLFCQHTYTRVIDSRVSEDGATIRRRRECEACGERFSTLETIELKLPVIIKKDGGREAFDGRKLRTSFDRALQKRPVAEECIEMALRAVIHRLRMAGEREVPSIVVGEYVMAELRKLDHVGYVRFASVYRSFQDVADFREEIEKLESELLVSREQLPLLEAAMESMGHPSVDQGGKHGV.

A zinc finger lies at 3-34 (CLFCQHTYTRVIDSRVSEDGATIRRRRECEAC). Positions 49–139 (PVIIKKDGGR…VYRSFQDVAD (91 aa)) constitute an ATP-cone domain.

The protein belongs to the NrdR family. Zn(2+) serves as cofactor.

In terms of biological role, negatively regulates transcription of bacterial ribonucleotide reductase nrd genes and operons by binding to NrdR-boxes. The sequence is that of Transcriptional repressor NrdR from Xylella fastidiosa (strain 9a5c).